We begin with the raw amino-acid sequence, 638 residues long: Protein disulfide-isomerase A4 (638 aa).

The N-terminal stretch at Met-1 to Ala-20 is a signal peptide. 2 consecutive Thioredoxin domains span residues Ala-21 to Gln-162 and Gln-162 to Lys-294. Residues Ala-24–Glu-50 are disordered. The segment covering Ser-32–Glu-50 has biased composition (acidic residues). Asn-36 carries an N-linked (GlcNAc...) asparagine glycan. The short motif at Cys-84–Cys-87 is the CXXC element. Disulfide bonds link Cys-84–Cys-87 and Cys-199–Cys-202. Position 359 is an N6-acetyllysine (Lys-359). In terms of domain architecture, Thioredoxin 3 spans Phe-498–Thr-629. A CXXC motif is present at residues Cys-548–Cys-551. A disulfide bridge links Cys-548 with Cys-551. Residues Lys-635–Leu-638 carry the Prevents secretion from ER motif.

This sequence belongs to the protein disulfide isomerase family. In terms of assembly, part of a large chaperone multiprotein complex comprising DNAJB11, HSP90B1, HSPA5, HYOU, PDIA2, PDIA4, PDIA6, PPIB, SDF2L1, UGGT1 and very small amounts of ERP29, but not, or at very low levels, CALR nor CANX. Component of a complex containing at least CRELD2, MANF, MATN3 and PDIA4.

The protein localises to the endoplasmic reticulum lumen. It localises to the melanosome. The catalysed reaction is Catalyzes the rearrangement of -S-S- bonds in proteins.. This is Protein disulfide-isomerase A4 (Pdia4) from Mus musculus (Mouse).